The chain runs to 234 residues: Response regulator RppA (234 aa).

The Response regulatory domain maps to 2–118 (RILLVEDETD…ELLARLRALQ (117 aa)). Position 53 is a 4-aspartylphosphate (D53). Residues 126–232 (PQILTLGNFS…VPGQGYRFTL (107 aa)) constitute a DNA-binding region (ompR/PhoB-type).

As to quaternary structure, interacts with histidine kinase Hik2; may accept phosphate from Hik2.

Its function is as follows. Member of two-component regulatory system RppA/RppB, involved in the establishment of the appropriate stoichiometry between the 2 photosystems. It senses changes in the plastoquinone (PQ) redox poise. Another group shows this two-component pair, renamed NrsR/NrsS, controls the nickel-dependent expression of the nrsBACD operon; they suggest the photosystem-related activities seen earlier are due to the expression of NrsS (RppB) in the absence of its natural substrate NrsR (RppA). May accept phosphate from Hik2 in a possible Hik2/RppA two-component system. This Synechocystis sp. (strain ATCC 27184 / PCC 6803 / Kazusa) protein is Response regulator RppA.